The following is a 114-amino-acid chain: Monothiol glutaredoxin-S8 (114 aa).

The Glutaredoxin domain maps to methionine 1–tryptophan 113. Residue cysteine 21 participates in [2Fe-2S] cluster binding.

The protein belongs to the glutaredoxin family. CC-type subfamily.

It localises to the cytoplasm. May only reduce GSH-thiol disulfides, but not protein disulfides. The polypeptide is Monothiol glutaredoxin-S8 (GRXS8) (Oryza sativa subsp. japonica (Rice)).